The chain runs to 165 residues: NADH-quinone oxidoreductase subunit I (165 aa).

2 4Fe-4S ferredoxin-type domains span residues 66-98 and 109-138; these read HRLT…ITAT and SKFT…MDTG. [4Fe-4S] cluster-binding residues include Cys78, Cys81, Cys84, Cys88, Cys118, Cys121, Cys124, and Cys128.

This sequence belongs to the complex I 23 kDa subunit family. NDH-1 is composed of 14 different subunits. Subunits NuoA, H, J, K, L, M, N constitute the membrane sector of the complex. The cofactor is [4Fe-4S] cluster.

It is found in the cell inner membrane. It carries out the reaction a quinone + NADH + 5 H(+)(in) = a quinol + NAD(+) + 4 H(+)(out). In terms of biological role, NDH-1 shuttles electrons from NADH, via FMN and iron-sulfur (Fe-S) centers, to quinones in the respiratory chain. The immediate electron acceptor for the enzyme in this species is believed to be ubiquinone. Couples the redox reaction to proton translocation (for every two electrons transferred, four hydrogen ions are translocated across the cytoplasmic membrane), and thus conserves the redox energy in a proton gradient. This Campylobacter fetus subsp. fetus (strain 82-40) protein is NADH-quinone oxidoreductase subunit I.